The following is a 244-amino-acid chain: Geranylgeranylglyceryl phosphate synthase (244 aa).

The Mg(2+) site is built by Asp21 and Thr50. Residues 168–174 (YLEAGSG), 200–201 (GG), and 222–223 (GN) each bind sn-glycerol 1-phosphate.

Belongs to the GGGP/HepGP synthase family. Group II subfamily. Requires Mg(2+) as cofactor.

The protein localises to the cytoplasm. It catalyses the reaction sn-glycerol 1-phosphate + (2E,6E,10E)-geranylgeranyl diphosphate = sn-3-O-(geranylgeranyl)glycerol 1-phosphate + diphosphate. Its pathway is membrane lipid metabolism; glycerophospholipid metabolism. Prenyltransferase that catalyzes the transfer of the geranylgeranyl moiety of geranylgeranyl diphosphate (GGPP) to the C3 hydroxyl of sn-glycerol-1-phosphate (G1P). This reaction is the first ether-bond-formation step in the biosynthesis of archaeal membrane lipids. The polypeptide is Geranylgeranylglyceryl phosphate synthase (Sulfurisphaera tokodaii (strain DSM 16993 / JCM 10545 / NBRC 100140 / 7) (Sulfolobus tokodaii)).